Here is a 134-residue protein sequence, read N- to C-terminus: MANPNFTPSWPLYKDADGVYVSALPIKAIKYANDGSANAEFDGPYADQYMSAQTVAVFKPEVGGYLFRSQYGELLYMSKTAFEANYTSASGSVANAETADKLSTARTITLTGAVTGSASFDGSANVTIETTSGS.

It localises to the virion. May cover virion head capsid and play a role in capsid stabilization. This Salmonella typhimurium (Bacteriophage ST64T) protein is Decoration protein (dec).